Consider the following 195-residue polypeptide: ATP-dependent Clp protease proteolytic subunit (195 aa).

Ser98 (nucleophile) is an active-site residue. Residue His123 is part of the active site.

The protein belongs to the peptidase S14 family. In terms of assembly, fourteen ClpP subunits assemble into 2 heptameric rings which stack back to back to give a disk-like structure with a central cavity, resembling the structure of eukaryotic proteasomes.

The protein localises to the cytoplasm. It carries out the reaction Hydrolysis of proteins to small peptides in the presence of ATP and magnesium. alpha-casein is the usual test substrate. In the absence of ATP, only oligopeptides shorter than five residues are hydrolyzed (such as succinyl-Leu-Tyr-|-NHMec, and Leu-Tyr-Leu-|-Tyr-Trp, in which cleavage of the -Tyr-|-Leu- and -Tyr-|-Trp bonds also occurs).. Functionally, cleaves peptides in various proteins in a process that requires ATP hydrolysis. Has a chymotrypsin-like activity. Plays a major role in the degradation of misfolded proteins. The sequence is that of ATP-dependent Clp protease proteolytic subunit from Helicobacter pylori (strain G27).